Here is a 123-residue protein sequence, read N- to C-terminus: Small ribosomal subunit protein uS12 (123 aa).

Position 89 is a 3-methylthioaspartic acid (D89).

It belongs to the universal ribosomal protein uS12 family. Part of the 30S ribosomal subunit. Contacts proteins S8 and S17. May interact with IF1 in the 30S initiation complex.

In terms of biological role, with S4 and S5 plays an important role in translational accuracy. Its function is as follows. Interacts with and stabilizes bases of the 16S rRNA that are involved in tRNA selection in the A site and with the mRNA backbone. Located at the interface of the 30S and 50S subunits, it traverses the body of the 30S subunit contacting proteins on the other side and probably holding the rRNA structure together. The combined cluster of proteins S8, S12 and S17 appears to hold together the shoulder and platform of the 30S subunit. This is Small ribosomal subunit protein uS12 from Caulobacter vibrioides (strain ATCC 19089 / CIP 103742 / CB 15) (Caulobacter crescentus).